The primary structure comprises 314 residues: DNA-directed RNA polymerase subunit alpha (314 aa).

The tract at residues 1–228 is alpha N-terminal domain (alpha-NTD); that stretch reads MIEIEKPKIE…EHLNIFVGLT (228 aa). The interval 246–314 is alpha C-terminal domain (alpha-CTD); that stretch reads EKVLEMTIEE…ELGLGLRKDD (69 aa).

Belongs to the RNA polymerase alpha chain family. As to quaternary structure, homodimer. The RNAP catalytic core consists of 2 alpha, 1 beta, 1 beta' and 1 omega subunit. When a sigma factor is associated with the core the holoenzyme is formed, which can initiate transcription.

It catalyses the reaction RNA(n) + a ribonucleoside 5'-triphosphate = RNA(n+1) + diphosphate. Its function is as follows. DNA-dependent RNA polymerase catalyzes the transcription of DNA into RNA using the four ribonucleoside triphosphates as substrates. This chain is DNA-directed RNA polymerase subunit alpha, found in Bacillus pumilus (strain SAFR-032).